The sequence spans 72 residues: UPF0270 protein YheU (72 aa).

The protein belongs to the UPF0270 family.

The polypeptide is UPF0270 protein YheU (Salmonella agona (strain SL483)).